Reading from the N-terminus, the 552-residue chain is Threonylcarbamoyladenosine tRNA methylthiotransferase (552 aa).

Residues 31 to 61 form a disordered region; sequence YENKKTVTVRAKKRSQIRLESQEEEEKPKPT. An MTTase N-terminal domain is found at 71 to 178; the sequence is QKVFVKTWGC…VVEVVEETLK (108 aa). The [4Fe-4S] cluster site is built by Cys80, Cys115, Cys144, Cys221, Cys225, and Cys228. In terms of domain architecture, Radical SAM core spans 207-438; it reads RKNPLIEIIS…DLFYSYEPYA (232 aa). Residues 438-500 form the TRAM domain; it reads ADRVGEIYTV…KFSMVGEILD (63 aa). The helical transmembrane segment at 532–552 threads the bilayer; it reads FGIALVLGSLAFLIQLVVRLL.

Belongs to the methylthiotransferase family. CDKAL1 subfamily. Requires [4Fe-4S] cluster as cofactor.

It localises to the membrane. The catalysed reaction is N(6)-L-threonylcarbamoyladenosine(37) in tRNA + (sulfur carrier)-SH + AH2 + 2 S-adenosyl-L-methionine = 2-methylsulfanyl-N(6)-L-threonylcarbamoyladenosine(37) in tRNA + (sulfur carrier)-H + 5'-deoxyadenosine + L-methionine + A + S-adenosyl-L-homocysteine + 2 H(+). Its function is as follows. Catalyzes the methylthiolation of N6-threonylcarbamoyladenosine (t(6)A), leading to the formation of 2-methylthio-N6-threonylcarbamoyladenosine (ms(2)t(6)A) at position 37 in tRNAs that read codons beginning with adenine. The sequence is that of Threonylcarbamoyladenosine tRNA methylthiotransferase from Drosophila melanogaster (Fruit fly).